The following is a 319-amino-acid chain: Vesicle-associated membrane protein-associated protein scs22 (319 aa).

In terms of domain architecture, MSP spans 1-121 (MALECDSTIV…SERKIRCVYS (121 aa)). At 1-298 (MALECDSTIV…GAKVVPQIHN (298 aa)) the chain is on the cytoplasmic side. Low complexity predominate over residues 127–150 (ANAHANAHHQPAQTTTTSIPTSAT). The tract at residues 127–244 (ANAHANAHHQ…TTSPNNENNA (118 aa)) is disordered. Composition is skewed to polar residues over residues 151-165 (DNYT…QSYS), 185-201 (STAT…SAVS), and 231-244 (SVPT…ENNA). T236 is subject to Phosphothreonine. A phosphoserine mark is found at S237 and S281. A helical; Anchor for type IV membrane protein transmembrane segment spans residues 299–319 (TVTVQTAFLLAIICFLIGLLF).

This sequence belongs to the VAMP-associated protein (VAP) (TC 9.B.17) family. As to quaternary structure, interacts with epr1.

The protein localises to the endoplasmic reticulum membrane. Vesicle-associated membrane protein-associated protein (VAP) implicated in maintaining the cortical endoplasmic reticulum (ER)-plasma membrane (PM) attachment. ER-PM contacts function to modulate the distribution of contractile ring components to ensure robust ring assembly. ER-PM contacts function also in controlling exocytosis and maintenance of cell polarity regulating cell shape. VAPs play an important role in regulating eisosome assembly. VAPs also contribute to ER-phagy by tethering atg8 to the ER membrane, but also by maintaining the ER-plasma membrane contact. This Schizosaccharomyces pombe (strain 972 / ATCC 24843) (Fission yeast) protein is Vesicle-associated membrane protein-associated protein scs22 (scs22).